Consider the following 126-residue polypeptide: Holo-[acyl-carrier-protein] synthase (126 aa).

Asp9 and Glu57 together coordinate Mg(2+).

This sequence belongs to the P-Pant transferase superfamily. AcpS family. Requires Mg(2+) as cofactor.

The protein resides in the cytoplasm. The catalysed reaction is apo-[ACP] + CoA = holo-[ACP] + adenosine 3',5'-bisphosphate + H(+). Functionally, transfers the 4'-phosphopantetheine moiety from coenzyme A to a Ser of acyl-carrier-protein. The polypeptide is Holo-[acyl-carrier-protein] synthase (Alteromonas mediterranea (strain DSM 17117 / CIP 110805 / LMG 28347 / Deep ecotype)).